Here is a 416-residue protein sequence, read N- to C-terminus: Gamma-glutamyl phosphate reductase (416 aa).

It belongs to the gamma-glutamyl phosphate reductase family.

It localises to the cytoplasm. The catalysed reaction is L-glutamate 5-semialdehyde + phosphate + NADP(+) = L-glutamyl 5-phosphate + NADPH + H(+). The protein operates within amino-acid biosynthesis; L-proline biosynthesis; L-glutamate 5-semialdehyde from L-glutamate: step 2/2. Its function is as follows. Catalyzes the NADPH-dependent reduction of L-glutamate 5-phosphate into L-glutamate 5-semialdehyde and phosphate. The product spontaneously undergoes cyclization to form 1-pyrroline-5-carboxylate. This chain is Gamma-glutamyl phosphate reductase, found in Streptococcus pyogenes serotype M1.